Here is a 163-residue protein sequence, read N- to C-terminus: Cytochrome c-type biogenesis protein CcmE (163 aa).

Over 1 to 8 the chain is Cytoplasmic; sequence MNPRRKKR. The chain crosses the membrane as a helical; Signal-anchor for type II membrane protein span at residues 9 to 29; it reads LTIILAISAGLAAVIGLVLYA. Residues 30–163 lie on the Periplasmic side of the membrane; it reads LSQNIDLFYT…TEAQLKGAKQ (134 aa). The heme site is built by H131 and Y135.

The protein belongs to the CcmE/CycJ family.

It is found in the cell inner membrane. Its function is as follows. Heme chaperone required for the biogenesis of c-type cytochromes. Transiently binds heme delivered by CcmC and transfers the heme to apo-cytochromes in a process facilitated by CcmF and CcmH. This Aeromonas salmonicida (strain A449) protein is Cytochrome c-type biogenesis protein CcmE.